Consider the following 125-residue polypeptide: MARIAGVNIPTNKRVVIALRYVYGIGPSTAQSICNKLEIPDAKRVNELSDDEIVKIRELIDSELRVEGDLRRETAMNIKRLMDLGCYRGLRHRRGLPVRGQRTHTNARTRKGKAVAIAGKKKVTR.

Belongs to the universal ribosomal protein uS13 family. Part of the 30S ribosomal subunit. Forms a loose heterodimer with protein S19. Forms two bridges to the 50S subunit in the 70S ribosome.

Functionally, located at the top of the head of the 30S subunit, it contacts several helices of the 16S rRNA. In the 70S ribosome it contacts the 23S rRNA (bridge B1a) and protein L5 of the 50S subunit (bridge B1b), connecting the 2 subunits; these bridges are implicated in subunit movement. Contacts the tRNAs in the A and P-sites. The polypeptide is Small ribosomal subunit protein uS13 (Gluconobacter oxydans (strain 621H) (Gluconobacter suboxydans)).